The chain runs to 69 residues: Large ribosomal subunit protein bL31 (69 aa).

Residues Cys17, Cys19, Cys37, and Cys40 each coordinate Zn(2+).

This sequence belongs to the bacterial ribosomal protein bL31 family. Type A subfamily. In terms of assembly, part of the 50S ribosomal subunit. It depends on Zn(2+) as a cofactor.

Its function is as follows. Binds the 23S rRNA. The protein is Large ribosomal subunit protein bL31 of Thermoanaerobacter pseudethanolicus (strain ATCC 33223 / 39E) (Clostridium thermohydrosulfuricum).